A 320-amino-acid polypeptide reads, in one-letter code: Malate dehydrogenase (320 aa).

NAD(+) is bound by residues 10 to 15 (GSGMIG) and D34. Residues R83 and R89 each coordinate substrate. Residues N96 and 119–121 (ITN) contribute to the NAD(+) site. 2 residues coordinate substrate: N121 and R152. The active-site Proton acceptor is the H176.

The protein belongs to the LDH/MDH superfamily. MDH type 3 family.

It carries out the reaction (S)-malate + NAD(+) = oxaloacetate + NADH + H(+). Its function is as follows. Catalyzes the reversible oxidation of malate to oxaloacetate. The protein is Malate dehydrogenase of Brucella suis (strain ATCC 23445 / NCTC 10510).